The chain runs to 664 residues: Metal-nicotianamine transporter YSL2 (664 aa).

Transmembrane regions (helical) follow at residues 31–51 (ITVR…VICL), 55–75 (LTTG…FVFL), 103–123 (CAVA…LLGL), 147–167 (GVGW…VVLV), 209–229 (GFIK…FYSG), 268–288 (LVNL…WPLI), 314–334 (FICI…ILFF), 378–398 (IPLW…IIAI), 409–429 (FVLV…YGAG), 457–477 (VVAG…SADL), 496–516 (VAQA…FFLF), 549–569 (SALP…AVAA), 594–614 (FLVG…VYVW), and 629–649 (VASG…LLAL).

This sequence belongs to the YSL (TC 2.A.67.2) family. In terms of tissue distribution, expressed in roots, leaves and weakly in shoots. Restricted to the veins, to the central cylinder of the young roots and to the pericycle and the endodermis cells facing the meta-xylem tubes in older roots. Expressed in the vasculature of sepals, petals, anthers, stigma and siliques, but not in developing seeds or in meristematic zones.

It is found in the cell membrane. Functionally, may be involved in the lateral transport of nicotianamine-chelated metals in the vasculature. The chain is Metal-nicotianamine transporter YSL2 (YSL2) from Arabidopsis thaliana (Mouse-ear cress).